Reading from the N-terminus, the 233-residue chain is Rab-like protein 3 (233 aa).

A small GTPase-like region spans residues M1–D233. GTP is bound by residues G16–S21, K148–D150, and D179–C180.

It belongs to the small GTPase superfamily. Rab family. In terms of assembly, homodimer.

Functionally, required for KRAS signaling regulation and modulation of cell proliferation. Regulator of KRAS prenylation, and probably prenylation of other small GTPases. Required for lymphocyte development and function. Not required for myeloid cell development. The sequence is that of Rab-like protein 3 (rabl3) from Danio rerio (Zebrafish).